A 192-amino-acid chain; its full sequence is MKIGILALQGAFAEHAQMLEKLGIESVELRNLKNFQQHYSDLSGLILPGGESTAIGKLLRELYMLEPIKQAISSGFPVFGTCAGLILLAKEITSQKESHFGTMDIVVERNAYGRQLGSFYTEADCKGVGKIPMTFIRGPIISSVGKKVNILATVNNKIVAAQEKNMLVTSFHPELTNNLSLHKYFIDICKVA.

Residue Gly-50–Ser-52 participates in L-glutamine binding. Cys-82 functions as the Nucleophile in the catalytic mechanism. L-glutamine-binding positions include Arg-109 and Ile-136–Arg-137. Catalysis depends on charge relay system residues His-172 and Glu-174.

Belongs to the glutaminase PdxT/SNO family. In terms of assembly, in the presence of PdxS, forms a dodecamer of heterodimers. Only shows activity in the heterodimer.

It carries out the reaction aldehydo-D-ribose 5-phosphate + D-glyceraldehyde 3-phosphate + L-glutamine = pyridoxal 5'-phosphate + L-glutamate + phosphate + 3 H2O + H(+). The catalysed reaction is L-glutamine + H2O = L-glutamate + NH4(+). It participates in cofactor biosynthesis; pyridoxal 5'-phosphate biosynthesis. Functionally, catalyzes the hydrolysis of glutamine to glutamate and ammonia as part of the biosynthesis of pyridoxal 5'-phosphate. The resulting ammonia molecule is channeled to the active site of PdxS. The protein is Pyridoxal 5'-phosphate synthase subunit PdxT of Haemophilus influenzae (strain PittGG).